The chain runs to 122 residues: Small ribosomal subunit protein uS12 (122 aa).

A 3-methylthioaspartic acid modification is found at aspartate 89.

This sequence belongs to the universal ribosomal protein uS12 family. Part of the 30S ribosomal subunit. Contacts proteins S8 and S17. May interact with IF1 in the 30S initiation complex.

In terms of biological role, with S4 and S5 plays an important role in translational accuracy. Interacts with and stabilizes bases of the 16S rRNA that are involved in tRNA selection in the A site and with the mRNA backbone. Located at the interface of the 30S and 50S subunits, it traverses the body of the 30S subunit contacting proteins on the other side and probably holding the rRNA structure together. The combined cluster of proteins S8, S12 and S17 appears to hold together the shoulder and platform of the 30S subunit. This Corynebacterium glutamicum (strain R) protein is Small ribosomal subunit protein uS12.